The chain runs to 794 residues: Protein SEY1 (794 aa).

Residues 1-687 lie on the Cytoplasmic side of the membrane; the sequence is MMEVIDSVLG…KRSIIKTTTA (687 aa). In terms of domain architecture, GB1/RHD3-type G spans 43–272; the sequence is GLDYHVISVF…ANPYYFKPQY (230 aa). 53-60 serves as a coordination point for GTP; that stretch reads GSQSSGKS. A coiled-coil region spans residues 331-352; the sequence is VDHILDDREKLGEVLKNLKQEC. Residues 688–708 traverse the membrane as a helical segment; it reads IPIWMYLLVVALGWNEFVMVL. Topologically, residues 709 to 711 are lumenal; that stretch reads RNP. The helical transmembrane segment at 712 to 732 threads the bilayer; sequence LLVTLVLLFGVGFIFVNKFGL. Residues 733–794 are Cytoplasmic-facing; the sequence is WGPVLNVAHN…SDNEKIEKSE (62 aa). A disordered region spans residues 770 to 794; sequence NSAGKESYEMKDMSDSDNEKIEKSE. Positions 775–794 are enriched in basic and acidic residues; that stretch reads ESYEMKDMSDSDNEKIEKSE.

Belongs to the TRAFAC class dynamin-like GTPase superfamily. GB1/RHD3 GTPase family. RHD3 subfamily.

Its subcellular location is the endoplasmic reticulum membrane. Cooperates with the reticulon proteins and tubule-shaping DP1 family proteins to generate and maintain the structure of the tubular endoplasmic reticulum network. Has GTPase activity, which is required for its function in ER organization. This is Protein SEY1 from Zygosaccharomyces rouxii (strain ATCC 2623 / CBS 732 / NBRC 1130 / NCYC 568 / NRRL Y-229).